The following is a 185-amino-acid chain: MTQSTVSSTIVEPYAEALMSVAQSNNLTNQIGEDVSFVLSLLQTSDDLKDFLVNPLTPADAQKAVLRQLAESRVQKQFFNFLLLLIDRRRIIFLEGICKYYQALLRKLNNTVLAEVTSTVELTDEQRHAITDKVKHMSQAAQVDLETSIDPDLIGGVIIKIGSQVLDASIRGQLRRMNSSITSLS.

Belongs to the ATPase delta chain family. F-type ATPases have 2 components, F(1) - the catalytic core - and F(0) - the membrane proton channel. F(1) has five subunits: alpha(3), beta(3), gamma(1), delta(1), epsilon(1). CF(0) has four main subunits: a(1), b(1), b'(1) and c(10-14). The alpha and beta chains form an alternating ring which encloses part of the gamma chain. F(1) is attached to F(0) by a central stalk formed by the gamma and epsilon chains, while a peripheral stalk is formed by the delta, b and b' chains.

The protein resides in the cellular thylakoid membrane. In terms of biological role, f(1)F(0) ATP synthase produces ATP from ADP in the presence of a proton or sodium gradient. F-type ATPases consist of two structural domains, F(1) containing the extramembraneous catalytic core and F(0) containing the membrane proton channel, linked together by a central stalk and a peripheral stalk. During catalysis, ATP synthesis in the catalytic domain of F(1) is coupled via a rotary mechanism of the central stalk subunits to proton translocation. Functionally, this protein is part of the stalk that links CF(0) to CF(1). It either transmits conformational changes from CF(0) to CF(1) or is implicated in proton conduction. In Acaryochloris marina (strain MBIC 11017), this protein is ATP synthase subunit delta.